Consider the following 380-residue polypeptide: Cytochrome b (380 aa).

The next 4 membrane-spanning stretches (helical) occupy residues 33–53 (SGSL…FLAM), 77–98 (WLIR…YLHV), 113–133 (WNIG…GYVL), and 178–198 (FFAF…IHLL). His-83 and His-97 together coordinate heme b. 2 residues coordinate heme b: His-182 and His-196. Residue His-201 participates in a ubiquinone binding. Helical transmembrane passes span 226–246 (YKDL…ALFS), 288–308 (LGGV…PILH), 320–340 (LSQI…WIGG), and 347–367 (FVLI…IALP).

Belongs to the cytochrome b family. As to quaternary structure, the cytochrome bc1 complex contains 3 respiratory subunits (MT-CYB, CYC1 and UQCRFS1), 2 core proteins (UQCRC1 and UQCRC2) and probably 6 low-molecular weight proteins. The cofactor is heme b.

It is found in the mitochondrion inner membrane. Its function is as follows. Component of the ubiquinol-cytochrome c reductase complex (complex III or cytochrome b-c1 complex) that is part of the mitochondrial respiratory chain. The b-c1 complex mediates electron transfer from ubiquinol to cytochrome c. Contributes to the generation of a proton gradient across the mitochondrial membrane that is then used for ATP synthesis. In Polyodon spathula (North American paddlefish), this protein is Cytochrome b (mt-cyb).